A 171-amino-acid chain; its full sequence is ATP synthase subunit b (171 aa).

A helical membrane pass occupies residues 19–39 (VGVGLILFIAIVIWAKAPAMI).

It belongs to the ATPase B chain family. F-type ATPases have 2 components, F(1) - the catalytic core - and F(0) - the membrane proton channel. F(1) has five subunits: alpha(3), beta(3), gamma(1), delta(1), epsilon(1). F(0) has three main subunits: a(1), b(2) and c(10-14). The alpha and beta chains form an alternating ring which encloses part of the gamma chain. F(1) is attached to F(0) by a central stalk formed by the gamma and epsilon chains, while a peripheral stalk is formed by the delta and b chains.

The protein resides in the cell inner membrane. Its function is as follows. F(1)F(0) ATP synthase produces ATP from ADP in the presence of a proton or sodium gradient. F-type ATPases consist of two structural domains, F(1) containing the extramembraneous catalytic core and F(0) containing the membrane proton channel, linked together by a central stalk and a peripheral stalk. During catalysis, ATP synthesis in the catalytic domain of F(1) is coupled via a rotary mechanism of the central stalk subunits to proton translocation. Component of the F(0) channel, it forms part of the peripheral stalk, linking F(1) to F(0). In Caulobacter sp. (strain K31), this protein is ATP synthase subunit b.